The sequence spans 227 residues: Urease accessory protein UreF (227 aa).

Belongs to the UreF family. As to quaternary structure, ureD, UreF and UreG form a complex that acts as a GTP-hydrolysis-dependent molecular chaperone, activating the urease apoprotein by helping to assemble the nickel containing metallocenter of UreC. The UreE protein probably delivers the nickel.

Its subcellular location is the cytoplasm. In terms of biological role, required for maturation of urease via the functional incorporation of the urease nickel metallocenter. This is Urease accessory protein UreF from Actinobacillus pleuropneumoniae serotype 3 (strain JL03).